A 363-amino-acid polypeptide reads, in one-letter code: tRNA N6-adenosine threonylcarbamoyltransferase (363 aa).

Fe cation-binding residues include His-121 and His-125. Residues 143 to 147 (LASGG), Asp-176, Gly-189, and Asn-287 each bind substrate. Position 315 (Asp-315) interacts with Fe cation.

Belongs to the KAE1 / TsaD family. It depends on Fe(2+) as a cofactor.

It localises to the cytoplasm. It carries out the reaction L-threonylcarbamoyladenylate + adenosine(37) in tRNA = N(6)-L-threonylcarbamoyladenosine(37) in tRNA + AMP + H(+). Required for the formation of a threonylcarbamoyl group on adenosine at position 37 (t(6)A37) in tRNAs that read codons beginning with adenine. Is involved in the transfer of the threonylcarbamoyl moiety of threonylcarbamoyl-AMP (TC-AMP) to the N6 group of A37, together with TsaE and TsaB. TsaD likely plays a direct catalytic role in this reaction. This Rhodopseudomonas palustris (strain ATCC BAA-98 / CGA009) protein is tRNA N6-adenosine threonylcarbamoyltransferase.